The sequence spans 185 residues: Chromobox protein homolog 1 (185 aa).

Residues Lys9 and Lys33 each participate in a glycyl lysine isopeptide (Lys-Gly) (interchain with G-Cter in SUMO2) cross-link. The Chromo 1 domain maps to 21–79; the sequence is YVVEKVLDRRVVKGKVEYLLKWKGFSDEDNTWEPEENLDCPDLIAEFLQSQKTAHETDK. Residues 63 to 124 are disordered; the sequence is LIAEFLQSQK…RGLEPERIIG (62 aa). Residues 73 to 89 show a composition bias toward basic and acidic residues; that stretch reads TAHETDKSEGGKRKADS. A phosphoserine mark is found at Ser89 and Ser91. The segment covering 96 to 121 has biased composition (basic and acidic residues); it reads EESKPKKKKEESEKPRGFARGLEPER. Glycyl lysine isopeptide (Lys-Gly) (interchain with G-Cter in SUMO2) cross-links involve residues Lys99 and Lys150. In terms of domain architecture, Chromo 2; shadow subtype spans 117–175; that stretch reads LEPERIIGATDSSGELMFLMKWKNSDEADLVPAKEANVKCPQVVISFYEERLTWHSYPS. Ser175 carries the phosphoserine modification.

As to quaternary structure, homodimer. Interacts directly with CHAF1A, EMSY, LBR, TIF1/TIF1A and TRIM28/TIF1B PXVXL motif via the chromoshadow domain. Interacts directly with histone H3 methylated at 'Lys-9' via the chromo domain. Interacts with SUV39H1 and SETDB1, KMT5B and KMT5C. Interacts with PRDM6. Interacts with POGZ. Interacts with CHAMP1. Interacts with INCENP. Interacts with SGO1; the CBX1 homodimer binds to one molecule of SGO1. Interacts with LRIF1 (via PxVxL motif). Interacts with HDGFL2. Interacts with CHD3. Interacts with CHD4. In terms of processing, not phosphorylated. Ubiquitinated. Expressed in all adult and embryonic tissues.

Its subcellular location is the nucleus. Its function is as follows. Component of heterochromatin. Recognizes and binds histone H3 tails methylated at 'Lys-9', leading to epigenetic repression. Interaction with lamin B receptor (LBR) can contribute to the association of the heterochromatin with the inner nuclear membrane. The chain is Chromobox protein homolog 1 (CBX1) from Homo sapiens (Human).